The sequence spans 519 residues: F-box only protein 31-A (519 aa).

Residues 11–37 form a disordered region; sequence GQSGGCRRRQQRKGAGNDPELEDEEEE. The F-box domain maps to 54-100; sequence PHSLLLLPPEILVEIFSLLPGTELGGLAQVCSKFRQILTTDTIWKRR. Residues Cys-196, His-204, Cys-220, and His-226 each contribute to the Zn(2+) site. A compositionally biased stretch (basic and acidic residues) spans 369–390; that stretch reads REQRQTDNEEDDGRGAGPDKAE. The disordered stretch occupies residues 369–424; sequence REQRQTDNEEDDGRGAGPDKAEPAQQPAPLLRPPNEDANGADDDGDGGEQKPPNVQ.

The protein belongs to the FBXO31 family. In terms of assembly, part of a SCF (SKP1-cullin-F-box) protein ligase complex SCF(FBXO31).

The protein resides in the cytoplasm. The protein operates within protein modification; protein ubiquitination. Substrate-recognition component of the SCF(FBXO31) protein ligase complex, which specifically mediates the ubiquitination of proteins amidated at their C-terminus in response to oxidative stress, leading to their degradation by the proteasome. Fbxo31 specifically recognizes and binds C-terminal peptides bearing an amide: C-terminal amidation in response to oxidative stress takes place following protein fragmentation. The SCF(FBXO31) also plays a role in G1 arrest following DNA damage by mediating ubiquitination of phosphorylated cyclin-D1 (ccnd1), promoting its degradation by the proteasome, resulting in G1 arrest. The SCF(FBXO31) complex is however not a major regulator of ccnd1 stability during the G1/S transition. The protein is F-box only protein 31-A (fbxo31-a) of Xenopus laevis (African clawed frog).